The chain runs to 92 residues: Large ribosomal subunit protein bL27 (92 aa).

A propeptide spanning residues 1–10 (MLLQLQIQLF) is cleaved from the precursor.

The protein belongs to the bacterial ribosomal protein bL27 family. Post-translationally, the N-terminus is cleaved by ribosomal processing cysteine protease Prp.

This is Large ribosomal subunit protein bL27 from Aster yellows witches'-broom phytoplasma (strain AYWB).